The chain runs to 409 residues: Serine/threonine transporter SstT (409 aa).

9 consecutive transmembrane segments (helical) span residues 17–37 (LVVQIIVGLVAGLLLASFFPA), 49–69 (FVSALKAVAPVLVFVLVMASI), 83–103 (ILLLYLVGTFSAAVVAVIASF), 142–162 (ALISANFIGILAWAIGLGIAF), 180–200 (VSLIVKVVIRFAPLGIFGLVA), 218–238 (LVVLLGCMLFVAFVVNPLIVF), 299–319 (MAGAAITITVLTLAAVHTLGI), 331–351 (VVASVCACGASGVAGGSLLLI), and 357–377 (LFGIPSEVAMQVVAVGFIIAI).

This sequence belongs to the dicarboxylate/amino acid:cation symporter (DAACS) (TC 2.A.23) family.

It localises to the cell inner membrane. It carries out the reaction L-serine(in) + Na(+)(in) = L-serine(out) + Na(+)(out). The enzyme catalyses L-threonine(in) + Na(+)(in) = L-threonine(out) + Na(+)(out). In terms of biological role, involved in the import of serine and threonine into the cell, with the concomitant import of sodium (symport system). In Pseudomonas paraeruginosa (strain DSM 24068 / PA7) (Pseudomonas aeruginosa (strain PA7)), this protein is Serine/threonine transporter SstT.